A 79-amino-acid polypeptide reads, in one-letter code: ATP synthase subunit c (79 aa).

Transmembrane regions (helical) follow at residues 11-31 and 59-79; these read IAVA…IGIL and LVDA…FAVI.

It belongs to the ATPase C chain family. In terms of assembly, F-type ATPases have 2 components, F(1) - the catalytic core - and F(0) - the membrane proton channel. F(1) has five subunits: alpha(3), beta(3), gamma(1), delta(1), epsilon(1). F(0) has three main subunits: a(1), b(2) and c(10-14). The alpha and beta chains form an alternating ring which encloses part of the gamma chain. F(1) is attached to F(0) by a central stalk formed by the gamma and epsilon chains, while a peripheral stalk is formed by the delta and b chains.

The protein localises to the cell membrane. F(1)F(0) ATP synthase produces ATP from ADP in the presence of a proton or sodium gradient. F-type ATPases consist of two structural domains, F(1) containing the extramembraneous catalytic core and F(0) containing the membrane proton channel, linked together by a central stalk and a peripheral stalk. During catalysis, ATP synthesis in the catalytic domain of F(1) is coupled via a rotary mechanism of the central stalk subunits to proton translocation. Functionally, key component of the F(0) channel; it plays a direct role in translocation across the membrane. A homomeric c-ring of between 10-14 subunits forms the central stalk rotor element with the F(1) delta and epsilon subunits. The chain is ATP synthase subunit c from Buchnera aphidicola subsp. Baizongia pistaciae (strain Bp).